Consider the following 453-residue polypeptide: Glutamate-rich protein 5 (453 aa).

3 disordered regions span residues 1–38 (MGCS…ALGR), 66–377 (NGVQ…EHPA), and 394–453 (TNEE…HSML). The span at 11 to 21 (AGDDNRLRSAT) shows a compositional bias: basic and acidic residues. Ser-155 is modified (phosphoserine). Composition is skewed to polar residues over residues 230–243 (LQET…SQPL) and 271–283 (QETL…SQLR). Basic and acidic residues-rich tracts occupy residues 305-332 (EEEK…EHGG), 364-374 (IQPERTVESME), and 394-403 (TNEEDQHIEG). A compositionally biased stretch (acidic residues) spans 404 to 413 (ETGETVETEM). Residues 414 to 424 (ESEKVSEGAET) are compositionally biased toward basic and acidic residues.

This chain is Glutamate-rich protein 5 (ERICH5), found in Bos taurus (Bovine).